Consider the following 375-residue polypeptide: Histidine biosynthesis bifunctional protein HisB (375 aa).

A histidinol-phosphatase region spans residues 1–168 (MTPILFVDRD…GIAHELADAP (168 aa)). Asp8 acts as the Nucleophile in catalysis. Mg(2+) contacts are provided by Asp8, Asp10, and Asp128. The active-site Proton donor is Asp10. Residues 169–375 (RRAVVQRNTK…TALPTTKGAL (207 aa)) are imidazoleglycerol-phosphate dehydratase.

In the N-terminal section; belongs to the histidinol-phosphatase family. The protein in the C-terminal section; belongs to the imidazoleglycerol-phosphate dehydratase family. It depends on Mg(2+) as a cofactor.

It is found in the cytoplasm. The catalysed reaction is D-erythro-1-(imidazol-4-yl)glycerol 3-phosphate = 3-(imidazol-4-yl)-2-oxopropyl phosphate + H2O. The enzyme catalyses L-histidinol phosphate + H2O = L-histidinol + phosphate. The protein operates within amino-acid biosynthesis; L-histidine biosynthesis; L-histidine from 5-phospho-alpha-D-ribose 1-diphosphate: step 6/9. It functions in the pathway amino-acid biosynthesis; L-histidine biosynthesis; L-histidine from 5-phospho-alpha-D-ribose 1-diphosphate: step 8/9. This Xanthomonas euvesicatoria pv. vesicatoria (strain 85-10) (Xanthomonas campestris pv. vesicatoria) protein is Histidine biosynthesis bifunctional protein HisB.